The following is a 292-amino-acid chain: Ribosomal RNA small subunit methyltransferase I (292 aa).

It belongs to the methyltransferase superfamily. RsmI family.

The protein resides in the cytoplasm. The enzyme catalyses cytidine(1402) in 16S rRNA + S-adenosyl-L-methionine = 2'-O-methylcytidine(1402) in 16S rRNA + S-adenosyl-L-homocysteine + H(+). Catalyzes the 2'-O-methylation of the ribose of cytidine 1402 (C1402) in 16S rRNA. The sequence is that of Ribosomal RNA small subunit methyltransferase I from Bacillus subtilis (strain 168).